A 372-amino-acid chain; its full sequence is GTP cyclohydrolase 1 type 2 homolog (372 aa).

A divalent metal cation contacts are provided by His-67, His-68, Asp-106, His-332, and Glu-335.

Belongs to the GTP cyclohydrolase I type 2/NIF3 family. In terms of assembly, homohexamer.

This chain is GTP cyclohydrolase 1 type 2 homolog, found in Halalkalibacterium halodurans (strain ATCC BAA-125 / DSM 18197 / FERM 7344 / JCM 9153 / C-125) (Bacillus halodurans).